A 388-amino-acid polypeptide reads, in one-letter code: Protochlorophyllide reductase A, chloroplastic (388 aa).

The transit peptide at 1-74 (MALQLLPSTL…KPSGKKTLRQ (74 aa)) directs the protein to the chloroplast.

The protein belongs to the short-chain dehydrogenases/reductases (SDR) family. POR subfamily.

Its subcellular location is the plastid. The protein localises to the chloroplast. It carries out the reaction chlorophyllide a + NADP(+) = protochlorophyllide a + NADPH + H(+). It functions in the pathway porphyrin-containing compound metabolism; chlorophyll biosynthesis. Functionally, phototransformation of protochlorophyllide (Pchlide) to chlorophyllide (Chlide). The polypeptide is Protochlorophyllide reductase A, chloroplastic (PORA) (Triticum aestivum (Wheat)).